The primary structure comprises 551 residues: Cilia- and flagella-associated protein 45 (551 aa).

Disordered stretches follow at residues 1–30 (MPLS…TKAV) and 461–489 (RLEE…QQKE). Positions 157-526 (NNNKKLSDLE…IKRKKLEELR (370 aa)) form a coiled coil.

Belongs to the CFAP45 family. In terms of assembly, microtubule inner protein component of sperm flagellar doublet microtubules. Interacts with AK8; dimerization with AK8 may create a cavity at the interface of the dimer that can accommodate AMP. Interacts with CFAP52. Interacts with ENKUR. Directly interacts with DNALI1. Interacts with DNAH11. Interacts with DNAI1. As to expression, expressed in respiratory cells and in sperm (at protein level). Expressed in nasopharyngeal epithelium and trachea.

The protein resides in the cytoplasm. It localises to the cytoskeleton. The protein localises to the cilium axoneme. Its subcellular location is the flagellum axoneme. It is found in the cell projection. The protein resides in the cilium. It localises to the flagellum. In terms of biological role, microtubule inner protein (MIP) part of the dynein-decorated doublet microtubules (DMTs) in cilia axoneme, which is required for motile cilia beating. It is an AMP-binding protein that may facilitate dynein ATPase-dependent ciliary and flagellar beating via adenine nucleotide homeostasis. May function as a donor of AMP to AK8 and hence promote ADP production. The sequence is that of Cilia- and flagella-associated protein 45 from Homo sapiens (Human).